We begin with the raw amino-acid sequence, 279 residues long: Probable endonuclease 4 (279 aa).

His69, His109, Glu145, Asp179, His182, His216, Asp229, His231, and Glu261 together coordinate Zn(2+).

The protein belongs to the AP endonuclease 2 family. It depends on Zn(2+) as a cofactor.

The catalysed reaction is Endonucleolytic cleavage to 5'-phosphooligonucleotide end-products.. Functionally, endonuclease IV plays a role in DNA repair. It cleaves phosphodiester bonds at apurinic or apyrimidinic (AP) sites, generating a 3'-hydroxyl group and a 5'-terminal sugar phosphate. The chain is Probable endonuclease 4 from Serratia proteamaculans (strain 568).